Here is a 527-residue protein sequence, read N- to C-terminus: 4-alpha-glucanotransferase (527 aa).

The protein belongs to the disproportionating enzyme family.

The protein localises to the cytoplasm. The catalysed reaction is Transfers a segment of a (1-&gt;4)-alpha-D-glucan to a new position in an acceptor, which may be glucose or a (1-&gt;4)-alpha-D-glucan.. The protein is 4-alpha-glucanotransferase (malQ) of Chlamydia muridarum (strain MoPn / Nigg).